The sequence spans 500 residues: Small ribosomal subunit protein uS3m (500 aa).

Belongs to the universal ribosomal protein uS3 family.

The protein resides in the mitochondrion. This is Small ribosomal subunit protein uS3m (RPS3) from Prototheca wickerhamii.